Consider the following 56-residue polypeptide: Large ribosomal subunit protein bL33c (56 aa).

It belongs to the bacterial ribosomal protein bL33 family.

The protein resides in the plastid. Its subcellular location is the chloroplast. This chain is Large ribosomal subunit protein bL33c, found in Rhodomonas salina (Cryptomonas salina).